Consider the following 570-residue polypeptide: Proline--tRNA ligase (570 aa).

Belongs to the class-II aminoacyl-tRNA synthetase family. ProS type 1 subfamily. Homodimer.

The protein resides in the cytoplasm. It carries out the reaction tRNA(Pro) + L-proline + ATP = L-prolyl-tRNA(Pro) + AMP + diphosphate. Functionally, catalyzes the attachment of proline to tRNA(Pro) in a two-step reaction: proline is first activated by ATP to form Pro-AMP and then transferred to the acceptor end of tRNA(Pro). As ProRS can inadvertently accommodate and process non-cognate amino acids such as alanine and cysteine, to avoid such errors it has two additional distinct editing activities against alanine. One activity is designated as 'pretransfer' editing and involves the tRNA(Pro)-independent hydrolysis of activated Ala-AMP. The other activity is designated 'posttransfer' editing and involves deacylation of mischarged Ala-tRNA(Pro). The misacylated Cys-tRNA(Pro) is not edited by ProRS. The chain is Proline--tRNA ligase from Acidithiobacillus ferrooxidans (strain ATCC 23270 / DSM 14882 / CIP 104768 / NCIMB 8455) (Ferrobacillus ferrooxidans (strain ATCC 23270)).